The primary structure comprises 98 residues: NADH-ubiquinone oxidoreductase chain 4L (98 aa).

The next 3 membrane-spanning stretches (helical) occupy residues 1–21 (MSLV…GLLM), 30–50 (LLCL…TILT), and 61–81 (IVLL…LVMV).

The protein belongs to the complex I subunit 4L family. As to quaternary structure, core subunit of respiratory chain NADH dehydrogenase (Complex I) which is composed of 45 different subunits.

It localises to the mitochondrion inner membrane. The enzyme catalyses a ubiquinone + NADH + 5 H(+)(in) = a ubiquinol + NAD(+) + 4 H(+)(out). Its function is as follows. Core subunit of the mitochondrial membrane respiratory chain NADH dehydrogenase (Complex I) which catalyzes electron transfer from NADH through the respiratory chain, using ubiquinone as an electron acceptor. Part of the enzyme membrane arm which is embedded in the lipid bilayer and involved in proton translocation. The chain is NADH-ubiquinone oxidoreductase chain 4L (MT-ND4L) from Crocidura russula (Greater white-toothed shrew).